A 63-amino-acid chain; its full sequence is Large ribosomal subunit protein bL28 (63 aa).

It belongs to the bacterial ribosomal protein bL28 family.

The chain is Large ribosomal subunit protein bL28 from Solibacter usitatus (strain Ellin6076).